The chain runs to 310 residues: tRNA dimethylallyltransferase (310 aa).

11 to 18 (GPTGVGKT) is a binding site for ATP. Position 13-18 (13-18 (TGVGKT)) interacts with substrate.

The protein belongs to the IPP transferase family. Monomer. Mg(2+) serves as cofactor.

It catalyses the reaction adenosine(37) in tRNA + dimethylallyl diphosphate = N(6)-dimethylallyladenosine(37) in tRNA + diphosphate. Catalyzes the transfer of a dimethylallyl group onto the adenine at position 37 in tRNAs that read codons beginning with uridine, leading to the formation of N6-(dimethylallyl)adenosine (i(6)A). In Latilactobacillus sakei subsp. sakei (strain 23K) (Lactobacillus sakei subsp. sakei), this protein is tRNA dimethylallyltransferase.